Reading from the N-terminus, the 183-residue chain is Putative manganese efflux pump MntP (183 aa).

A run of 6 helical transmembrane segments spans residues Leu-6–Leu-26, Ile-40–Phe-60, Ile-64–Ile-84, Met-101–Leu-121, Leu-135–Leu-155, and Ile-158–Leu-178.

This sequence belongs to the MntP (TC 9.B.29) family.

The protein resides in the cell membrane. In terms of biological role, probably functions as a manganese efflux pump. This Clostridium tetani (strain Massachusetts / E88) protein is Putative manganese efflux pump MntP.